Consider the following 464-residue polypeptide: UDP-glycosyltransferase 76C1 (464 aa).

UDP-alpha-D-glucose-binding positions include Ser279, 338-340, 355-363, and 377-380; these read APQ, HNGWNSTLE, and KWDQ.

This sequence belongs to the UDP-glycosyltransferase family.

Its activity is regulated as follows. Inhibited by olomoucine and 3-isobutyl-1-methylxanthine. Its function is as follows. Involved in the N-glucosylation of cytokinins. Catalyzes the formation of both the 7-N and the 9-N-glucosides. The polypeptide is UDP-glycosyltransferase 76C1 (UGT76C1) (Arabidopsis thaliana (Mouse-ear cress)).